The following is a 426-amino-acid chain: Cytochrome c biogenesis protein CcsB (426 aa).

3 helical membrane-spanning segments follow: residues 14–34 (LKIA…GTLI), 72–92 (SFWF…CSFR), and 162–182 (LGPI…TYGS).

It belongs to the Ccs1/CcsB family. In terms of assembly, may interact with CcsA.

The protein localises to the cellular thylakoid membrane. In terms of biological role, required during biogenesis of c-type cytochromes (cytochrome c6 and cytochrome f) at the step of heme attachment. This Prochlorococcus marinus (strain NATL1A) protein is Cytochrome c biogenesis protein CcsB.